Here is an 833-residue protein sequence, read N- to C-terminus: Leucine--tRNA ligase (833 aa).

The 'HIGH' region signature appears at 41–52 (PYPSGAGLHVGH). The 'KMSKS' region signature appears at 610–614 (KMSKS). Residue Lys-613 coordinates ATP.

This sequence belongs to the class-I aminoacyl-tRNA synthetase family.

It localises to the cytoplasm. It carries out the reaction tRNA(Leu) + L-leucine + ATP = L-leucyl-tRNA(Leu) + AMP + diphosphate. The protein is Leucine--tRNA ligase of Streptococcus pyogenes serotype M2 (strain MGAS10270).